Reading from the N-terminus, the 70-residue chain is Large ribosomal subunit protein bL31 (70 aa).

Zn(2+)-binding residues include Cys-16, Cys-18, Cys-37, and Cys-40.

This sequence belongs to the bacterial ribosomal protein bL31 family. Type A subfamily. As to quaternary structure, part of the 50S ribosomal subunit. Zn(2+) serves as cofactor.

Its function is as follows. Binds the 23S rRNA. This Cronobacter sakazakii (strain ATCC BAA-894) (Enterobacter sakazakii) protein is Large ribosomal subunit protein bL31.